The sequence spans 365 residues: tRNA 2-selenouridine synthase (365 aa).

The 123-residue stretch at 16–138 (FLLKTPLIDL…LRRYLINVID (123 aa)) folds into the Rhodanese domain. The S-selanylcysteine intermediate role is filled by Cys-98.

This sequence belongs to the SelU family. In terms of assembly, monomer.

It carries out the reaction 5-methylaminomethyl-2-thiouridine(34) in tRNA + selenophosphate + (2E)-geranyl diphosphate + H2O + H(+) = 5-methylaminomethyl-2-selenouridine(34) in tRNA + (2E)-thiogeraniol + phosphate + diphosphate. The catalysed reaction is 5-methylaminomethyl-2-thiouridine(34) in tRNA + (2E)-geranyl diphosphate = 5-methylaminomethyl-S-(2E)-geranyl-thiouridine(34) in tRNA + diphosphate. It catalyses the reaction 5-methylaminomethyl-S-(2E)-geranyl-thiouridine(34) in tRNA + selenophosphate + H(+) = 5-methylaminomethyl-2-(Se-phospho)selenouridine(34) in tRNA + (2E)-thiogeraniol. The enzyme catalyses 5-methylaminomethyl-2-(Se-phospho)selenouridine(34) in tRNA + H2O = 5-methylaminomethyl-2-selenouridine(34) in tRNA + phosphate. Its function is as follows. Involved in the post-transcriptional modification of the uridine at the wobble position (U34) of tRNA(Lys), tRNA(Glu) and tRNA(Gln). Catalyzes the conversion of 2-thiouridine (S2U-RNA) to 2-selenouridine (Se2U-RNA). Acts in a two-step process involving geranylation of 2-thiouridine (S2U) to S-geranyl-2-thiouridine (geS2U) and subsequent selenation of the latter derivative to 2-selenouridine (Se2U) in the tRNA chain. This is tRNA 2-selenouridine synthase from Psychromonas ingrahamii (strain DSM 17664 / CCUG 51855 / 37).